Here is a 417-residue protein sequence, read N- to C-terminus: Solanesyl diphosphate synthase 2, chloroplastic (417 aa).

The N-terminal 60 residues, 1-60, are a transit peptide targeting the chloroplast; sequence MMMSCRNIDLGTSVLDHSCSSSSTSRRFLFGNSSKTVCMIGGRSCVGNLVFLRRDLATCR. Lys137, Arg140, and His175 together coordinate isopentenyl diphosphate. Mg(2+) contacts are provided by Asp182 and Asp186. Arg191 serves as a coordination point for an all-trans-polyprenyl diphosphate. Arg192 is a binding site for isopentenyl diphosphate. Positions 268, 269, 306, and 323 each coordinate an all-trans-polyprenyl diphosphate.

It belongs to the FPP/GGPP synthase family. Homodimer. Interacts with FBN5. The cofactor is Mg(2+). Higher expression in leaves than in roots.

The protein resides in the plastid. Its subcellular location is the chloroplast. It catalyses the reaction 5 isopentenyl diphosphate + (2E,6E,10E)-geranylgeranyl diphosphate = all-trans-nonaprenyl diphosphate + 5 diphosphate. In terms of biological role, involved in providing solanesyl diphosphate for plastoquinone-9 (PQ-9) formation in plastids. Catalyzes the elongation of the prenyl side chain of PQ-9 in plastids. Contributes to the biosynthesis of plastochromanol-8 (PC-8) in plastids. Does not contribute to the synthesis of tocopherol or ubiquinone. PQ-9 and PC-8 are lipophilic antioxidants that act as protectant against photooxidative stress under high light stress conditions. Prefers geranylgeranyl diphosphate to farnesyl diphosphate as substrate. No activity with geranyl diphosphate or dimethylallyl diphosphate as substrate. This Arabidopsis thaliana (Mouse-ear cress) protein is Solanesyl diphosphate synthase 2, chloroplastic.